A 336-amino-acid chain; its full sequence is Flagellar filament 41 kDa core protein (336 aa).

Residues 208-236 (AAPVQEGVQQEGAQQPAPATAPSQGGVNS) form a disordered region. Over residues 210–233 (PVQEGVQQEGAQQPAPATAPSQGG) the composition is skewed to low complexity.

It belongs to the bacterial flagellin family. In terms of assembly, the flagellum consists of an outer layer composed of repeating units of FlaA around a core that contains several antigenically related polypeptides.

It is found in the periplasmic flagellum. The protein resides in the periplasm. In terms of biological role, component of the core of the flagella. The polypeptide is Flagellar filament 41 kDa core protein (fla) (Borreliella burgdorferi (strain ATCC 35210 / DSM 4680 / CIP 102532 / B31) (Borrelia burgdorferi)).